We begin with the raw amino-acid sequence, 341 residues long: Ketol-acid reductoisomerase (NADP(+)) (341 aa).

The KARI N-terminal Rossmann domain maps to leucine 3–threonine 184. NADP(+) contacts are provided by residues phenylalanine 26 to glutamine 29, serine 54, and aspartate 84 to glutamine 87. The active site involves histidine 109. NADP(+) is bound at residue glycine 135. The 146-residue stretch at threonine 185–isoleucine 330 folds into the KARI C-terminal knotted domain. Aspartate 193, glutamate 197, glutamate 229, and glutamate 233 together coordinate Mg(2+). Position 254 (serine 254) interacts with substrate.

Belongs to the ketol-acid reductoisomerase family. Requires Mg(2+) as cofactor.

The enzyme catalyses (2R)-2,3-dihydroxy-3-methylbutanoate + NADP(+) = (2S)-2-acetolactate + NADPH + H(+). It catalyses the reaction (2R,3R)-2,3-dihydroxy-3-methylpentanoate + NADP(+) = (S)-2-ethyl-2-hydroxy-3-oxobutanoate + NADPH + H(+). Its pathway is amino-acid biosynthesis; L-isoleucine biosynthesis; L-isoleucine from 2-oxobutanoate: step 2/4. It participates in amino-acid biosynthesis; L-valine biosynthesis; L-valine from pyruvate: step 2/4. In terms of biological role, involved in the biosynthesis of branched-chain amino acids (BCAA). Catalyzes an alkyl-migration followed by a ketol-acid reduction of (S)-2-acetolactate (S2AL) to yield (R)-2,3-dihydroxy-isovalerate. In the isomerase reaction, S2AL is rearranged via a Mg-dependent methyl migration to produce 3-hydroxy-3-methyl-2-ketobutyrate (HMKB). In the reductase reaction, this 2-ketoacid undergoes a metal-dependent reduction by NADPH to yield (R)-2,3-dihydroxy-isovalerate. This Helicobacter hepaticus (strain ATCC 51449 / 3B1) protein is Ketol-acid reductoisomerase (NADP(+)).